We begin with the raw amino-acid sequence, 172 residues long: Translationally-controlled tumor protein homolog (172 aa).

The TCTP domain maps to 1–172 (MIIYRDCISQ…FKDGLEIEKC (172 aa)). At Ser46 the chain carries Phosphoserine; by PLK1.

Belongs to the TCTP family.

Its subcellular location is the cytoplasm. Involved in calcium binding and microtubule stabilization. In Gallus gallus (Chicken), this protein is Translationally-controlled tumor protein homolog (TPT1).